Consider the following 313-residue polypeptide: MSKKVLITGGAGYIGSVLTPILLEKGYEVCVIDNLMFDQISLLSCFHNKNFTFINGDAMDENLIRQEVAKADIIIPLAALVGAPLCKRNPKLAKMINYEAVKMISDFASPSQIFIYPNTNSGYGIGEKDAMCTEESPLRPISEYGIDKVHAEQYLLDKGNCVTFRLATVFGISPRMRLDLLVNDFTYRAYRDKFIVLFEEHFRRNYIHVRDVVKGFIHGIENYDKMKGQAYNMGLSSANLTKRQLAETIKKYIPDFYIHSANIGEDPDKRDYLVSNTKLEATGWKPDNTLEDGIKELLRAFKMMKVNRFANFN.

NADH contacts are provided by residues 13-14 (YI), 33-39 (DNLMFDQ), phenylalanine 37, 57-58 (DA), leucine 77, and 144-148 (YGIDK). Threonine 168 contacts GDP. NADH-binding positions include valine 169 and 175–177 (RMR). Residues 179–184 (DLLVND), 196–198 (VLF), arginine 204, lysine 242, and arginine 270 each bind GDP. Asparagine 311 is an NADH binding site.

As to quaternary structure, homotetramer. NAD(+) serves as cofactor.

It catalyses the reaction GDP-D-glycero-alpha-D-manno-heptose + 2-oxoglutarate = GDP-D-glycero-4-keto-alpha-D-lyxo-heptose + (S)-2-hydroxyglutarate. It participates in capsule biogenesis; capsule polysaccharide biosynthesis. NAD-dependent dehydrogenase involved in the biosynthesis of heptose moieties with a hydroxyl group at C6 found on the capsular polysaccharide (CPS) of C.jejuni. Catalyzes the initial oxidation of C4 of the GDP-D-glycero-alpha-D-manno-heptose to form GDP-D-glycero-4-keto-alpha-D-lyxo-heptose in the presence of alpha-ketoglutarate required to recycle the NADH nucleotide. This chain is GDP-D-glycero-alpha-D-manno-heptose dehydrogenase, found in Campylobacter jejuni subsp. jejuni serotype O:2 (strain ATCC 700819 / NCTC 11168).